Reading from the N-terminus, the 1638-residue chain is Ciliary rootlet coiled-coil protein 2 (1638 aa).

Polar residues predominate over residues 1–20 (MSSTSSNPDDGDTTEQSQLG). 4 disordered regions span residues 1–21 (MSSTSSNPDDGDTTEQSQLGL), 39–92 (REDR…REES), 396–423 (ARLRSPPRSVSPHQRMSPARTSSPTSLH), and 1168–1213 (TRRK…NLQE). Low complexity predominate over residues 67–82 (SSSLGEEPLSGLREPP). The stretch at 85-144 (TSHAREESELLQEELTRLEDLLAQADAEREELASRCHMVSQRLQARLDTTEARLRKSELE) forms a coiled coil. The span at 406–421 (SPHQRMSPARTSSPTS) shows a compositional bias: polar residues. Coiled coils occupy residues 426–1234 (LQAV…VQKE) and 1281–1315 (LQEASNQADSLQRSLDNACSRVHVLEQELAKAEGA). Residues 1180–1193 (RTLEAENQRKRQEV) show a composition bias toward basic and acidic residues. Disordered regions lie at residues 1338–1383 (RNLL…VPVD) and 1506–1551 (ALEE…QTTS). Polar residues predominate over residues 1349–1371 (SPTTGSSQTRPGRQRTSPPTRSY). Coiled coils occupy residues 1412–1506 (RDNS…LRQA) and 1542–1576 (RRALREQTTSLRTERARLQGELAALRTRLIQTEQE).

This sequence belongs to the rootletin family.

The chain is Ciliary rootlet coiled-coil protein 2 from Mus musculus (Mouse).